We begin with the raw amino-acid sequence, 510 residues long: AAA-ATPase At3g28540 (510 aa).

Residues 7 to 25 (LFGFTGTTMASLMFFWSVY) traverse the membrane as a helical segment. 246–253 (GPPGTGKS) contacts ATP. A disordered region spans residues 460-510 (KEKAKKLAEEEKMKKAARDARRIKKKAEEEHKKKNKVEENGDVSHDNGNHI).

This sequence belongs to the AAA ATPase family. BCS1 subfamily. It depends on Mg(2+) as a cofactor.

The protein resides in the membrane. The catalysed reaction is ATP + H2O = ADP + phosphate + H(+). This chain is AAA-ATPase At3g28540, found in Arabidopsis thaliana (Mouse-ear cress).